Here is a 318-residue protein sequence, read N- to C-terminus: MGARGALLLALLLARAGLGKPGELGALQAGPGAARRPGGGGREEACGHREIHALVAGGVESARGRWPWQASLRLRRRHRCGGSLLSRRWVLSAAHCFQKHYYPSEWTVQLGELTSRPTPWNLRAYSSRYKVQDIIVNPDALGVLRNDIALLRLASSVTYNAYIQPICIESSTFNFVHRPDCWVTGWGLISPSGTPLPPPYNLREAQVTILNNTRCNYLFEQPSSRSMIWDSMFCAGAEDGSVDTCKGDSGGPLVCDKDGLWYQVGIVSWGMDCGQPNRPGVYTNISVYFHWIRRVMSHSTPRPNPSQLLLLLALLWAP.

The first 19 residues, 1–19, serve as a signal peptide directing secretion; the sequence is MGARGALLLALLLARAGLG. The propeptide occupies 20 to 54; the sequence is KPGELGALQAGPGAARRPGGGGREEACGHREIHAL. The 243-residue stretch at 55–297 folds into the Peptidase S1 domain; the sequence is VAGGVESARG…YFHWIRRVMS (243 aa). An intrachain disulfide couples cysteine 80 to cysteine 96. Residues histidine 95 and aspartate 147 each act as charge relay system in the active site. Cystine bridges form between cysteine 181–cysteine 255, cysteine 215–cysteine 234, and cysteine 245–cysteine 273. An N-linked (GlcNAc...) asparagine glycan is attached at asparagine 211. Serine 249 serves as the catalytic Charge relay system. A glycan (N-linked (GlcNAc...) asparagine) is linked at asparagine 284. Serine 299 is lipidated: GPI-anchor amidated serine. The propeptide at 300 to 318 is removed in mature form; it reads TPRPNPSQLLLLLALLWAP.

Belongs to the peptidase S1 family. N-glycosylated.

The protein resides in the cell membrane. The chain is Serine protease 41 from Homo sapiens (Human).